The chain runs to 506 residues: FAD-linked oxidoreductase chry5 (506 aa).

An N-terminal signal peptide occupies residues 1–17 (MHLQALTGLATLAVTAA). In terms of domain architecture, FAD-binding PCMH-type spans 59-241 (LDKPTVNIVA…TSVTSKTYDA (183 aa)). Asparagine 205, asparagine 272, asparagine 281, asparagine 389, and asparagine 431 each carry an N-linked (GlcNAc...) asparagine glycan.

The protein belongs to the oxygen-dependent FAD-linked oxidoreductase family. FAD is required as a cofactor.

It participates in pigment biosynthesis. Functionally, FAD-linked oxidoreductase; part of the gene cluster that mediates the biosynthesis of the yellow pigment chrysogine. Pyruvic acid and anthranilic acid are likely substrates for the nonribosomal peptide synthetase chry1/NRPS14, with pyruvic acid adenylated by the first A domain and anthranilic acid by the second. If pyruvic acid and anthranilic acid are merged and released from chry1/NRPS14 by hydrolysis, a subsequent amidation would lead to 2-pyruvoylaminobenzamide. This process is probably catalyzed by the amidotransferase chry2 using glutamine as amino donor. The dehydrogenase chry5 that has a terminal berberine bridge domain for C-N cyclization could catalyze the cyclization of 2-pyruvoylaminobenzamide to yield acetyl-4(3H)-quinazolidinone. A final reduction of acetyl-4(3H)-quinazolidinone catalyzed by the oxidoreductase chry4 would result in chrysogine. This chain is FAD-linked oxidoreductase chry5, found in Gibberella zeae (strain ATCC MYA-4620 / CBS 123657 / FGSC 9075 / NRRL 31084 / PH-1) (Wheat head blight fungus).